The chain runs to 348 residues: Succinoglycan biosynthesis protein ExoO (348 aa).

A disordered region spans residues 322 to 348 (HSAPRAAPVTAAAERSPLGNDPRISKG). A compositionally biased stretch (low complexity) spans 324–334 (APRAAPVTAAA).

It belongs to the glycosyltransferase 2 family.

Its subcellular location is the cytoplasm. It participates in glycan metabolism; exopolysaccharide biosynthesis. Glycosyltransferase required for the synthesis of succinoglycan (EPS I). Needed for the addition of the fifth sugar (glucose), catalyzes the formation of a beta-1,6 linkage between the fourth and fifth sugar. The sequence is that of Succinoglycan biosynthesis protein ExoO (exoO) from Rhizobium meliloti (strain 1021) (Ensifer meliloti).